Here is a 457-residue protein sequence, read N- to C-terminus: ATP synthase subunit beta (457 aa).

Residue 147 to 154 (GGAGVGKT) coordinates ATP.

This sequence belongs to the ATPase alpha/beta chains family. As to quaternary structure, F-type ATPases have 2 components, CF(1) - the catalytic core - and CF(0) - the membrane proton channel. CF(1) has five subunits: alpha(3), beta(3), gamma(1), delta(1), epsilon(1). CF(0) has three main subunits: a(1), b(2) and c(9-12). The alpha and beta chains form an alternating ring which encloses part of the gamma chain. CF(1) is attached to CF(0) by a central stalk formed by the gamma and epsilon chains, while a peripheral stalk is formed by the delta and b chains.

The protein localises to the cell inner membrane. It catalyses the reaction ATP + H2O + 4 H(+)(in) = ADP + phosphate + 5 H(+)(out). Produces ATP from ADP in the presence of a proton gradient across the membrane. The catalytic sites are hosted primarily by the beta subunits. This Haemophilus influenzae (strain PittEE) protein is ATP synthase subunit beta.